The chain runs to 227 residues: uncharacterized protein (227 aa).

It to ORF5 in pFZ1.

This is an uncharacterized protein from Methanothermobacter thermautotrophicus (Methanobacterium thermoformicicum).